A 61-amino-acid polypeptide reads, in one-letter code: MRCVAIFLVVICAFVLQALAEVQCPASGASDQDNLDFCMEYPELIEKCELKSCEGFIKVVS.

A signal peptide spans 1–20; the sequence is MRCVAIFLVVICAFVLQALA.

As to expression, expressed by the venom gland.

It is found in the secreted. The protein is Small venom protein 1 of Pimpla hypochondriaca (Parasitoid wasp).